The following is an 864-amino-acid chain: Leucine--tRNA ligase (864 aa).

Residues 57-67 carry the 'HIGH' region motif; the sequence is PYPSGNLHMGH. Positions 628–632 match the 'KMSKS' region motif; sequence KMSKS. K631 provides a ligand contact to ATP.

This sequence belongs to the class-I aminoacyl-tRNA synthetase family.

Its subcellular location is the cytoplasm. The enzyme catalyses tRNA(Leu) + L-leucine + ATP = L-leucyl-tRNA(Leu) + AMP + diphosphate. The protein is Leucine--tRNA ligase of Prochlorococcus marinus (strain MIT 9515).